The chain runs to 545 residues: Methionine--tRNA ligase (545 aa).

Positions 13 to 23 (PYANGEIHLGH) match the 'HIGH' region motif. The Zn(2+) site is built by cysteine 144, cysteine 147, cysteine 157, and cysteine 160. The short motif at 329–333 (KMSKS) is the 'KMSKS' region element. Position 332 (lysine 332) interacts with ATP.

Belongs to the class-I aminoacyl-tRNA synthetase family. MetG type 1 subfamily. As to quaternary structure, monomer. Zn(2+) is required as a cofactor.

The protein resides in the cytoplasm. The catalysed reaction is tRNA(Met) + L-methionine + ATP = L-methionyl-tRNA(Met) + AMP + diphosphate. Is required not only for elongation of protein synthesis but also for the initiation of all mRNA translation through initiator tRNA(fMet) aminoacylation. In Vesicomyosocius okutanii subsp. Calyptogena okutanii (strain HA), this protein is Methionine--tRNA ligase.